Consider the following 224-residue polypeptide: Protein FMP52, mitochondrial (224 aa).

The protein belongs to the FMP52 family.

It localises to the mitochondrion outer membrane. The sequence is that of Protein FMP52, mitochondrial (FMP52) from Kluyveromyces lactis (strain ATCC 8585 / CBS 2359 / DSM 70799 / NBRC 1267 / NRRL Y-1140 / WM37) (Yeast).